The sequence spans 199 residues: Protein Thf1 (199 aa).

Residues 167-198 are a coiled coil; sequence QYSRVEKDISMYKSNIEKMKQALEIIALNLKT.

Belongs to the THF1 family.

Functionally, may be involved in photosynthetic membrane biogenesis. The polypeptide is Protein Thf1 (Prochlorococcus marinus (strain NATL1A)).